A 169-amino-acid chain; its full sequence is Peptide deformylase (169 aa).

Fe cation contacts are provided by Cys-94 and His-136. Residue Glu-137 is part of the active site. His-140 serves as a coordination point for Fe cation.

Belongs to the polypeptide deformylase family. Fe(2+) is required as a cofactor.

The enzyme catalyses N-terminal N-formyl-L-methionyl-[peptide] + H2O = N-terminal L-methionyl-[peptide] + formate. Functionally, removes the formyl group from the N-terminal Met of newly synthesized proteins. Requires at least a dipeptide for an efficient rate of reaction. N-terminal L-methionine is a prerequisite for activity but the enzyme has broad specificity at other positions. This chain is Peptide deformylase, found in Phenylobacterium zucineum (strain HLK1).